The sequence spans 370 residues: Ribosomal RNA small subunit methyltransferase H (370 aa).

Residues 85–87 (GGH), D104, Y131, D152, and Q159 each bind S-adenosyl-L-methionine. Composition is skewed to basic and acidic residues over residues 332-345 (GAER…ERNP) and 353-370 (RALE…RDAR). A disordered region spans residues 332–370 (GAERATPEEIERNPRSAPVRLRALEKVAGRPTTARRDAR).

It belongs to the methyltransferase superfamily. RsmH family.

The protein resides in the cytoplasm. It catalyses the reaction cytidine(1402) in 16S rRNA + S-adenosyl-L-methionine = N(4)-methylcytidine(1402) in 16S rRNA + S-adenosyl-L-homocysteine + H(+). Specifically methylates the N4 position of cytidine in position 1402 (C1402) of 16S rRNA. In Mycobacterium sp. (strain KMS), this protein is Ribosomal RNA small subunit methyltransferase H.